The sequence spans 61 residues: Probable tautomerase LL0574 (61 aa).

Proline 2 functions as the Proton acceptor; via imino nitrogen in the catalytic mechanism.

The protein belongs to the 4-oxalocrotonate tautomerase family.

In Lactococcus lactis subsp. lactis (strain IL1403) (Streptococcus lactis), this protein is Probable tautomerase LL0574.